Here is a 561-residue protein sequence, read N- to C-terminus: DNA ligase B (561 aa).

The active-site N6-AMP-lysine intermediate is Lys-128.

It belongs to the NAD-dependent DNA ligase family. LigB subfamily.

The catalysed reaction is NAD(+) + (deoxyribonucleotide)n-3'-hydroxyl + 5'-phospho-(deoxyribonucleotide)m = (deoxyribonucleotide)n+m + AMP + beta-nicotinamide D-nucleotide.. Functionally, catalyzes the formation of phosphodiester linkages between 5'-phosphoryl and 3'-hydroxyl groups in double-stranded DNA using NAD as a coenzyme and as the energy source for the reaction. This Pseudomonas syringae pv. syringae (strain B728a) protein is DNA ligase B.